The following is a 576-amino-acid chain: MIIAVRSPSGTTKINVSDTAIVKDLYVKLKENNVDIDGKSITKTPRDPPLEVGDKLSSLGIKSGDLLHLVGNNNNNNNDNKASSGSNNNNNNNNISKKEISYDEKLPNGLTPRCKHAVGDKCVFCSDAQGMKRCDHPENATCPNCQNKKFKGKRLKWLCNHPAGGKCSNCLRVGKNVSYKCNHGSTATCVNCMDKDDEDQDDNEEDNKDNKDNSEIKKSGFVPKVAIKNEVKTKCLHGPNQKCINCLPKDDPNSIEVPKRRCKNHGINGSCVECIEWRESLKMRLKSQDNPHAPGALVDFQSANIFQQYIANSKYEQQRIGFLFGNFLSDGSVVVDSIYEPPQECKDKQTPTLLPDPLADKIESMASMLGLTRVGWIFSHPSRKYTMSSTEIIQAASYQNKYGPSFVTLILSVNSDGQSNMEAFQVSDQALKLEKTGEFLPTQPDPTKCKLKSPVFEEGTETINADTHFFIVTVPLKAREDKSIFNISFPVENRIPVNTLSDLASYKLEHKDVSPLKFFSDFHFLIFLLENQFLDFQSDFPIICENIRSRSSENLIGYLEIINYQIGDIIGHDQFN.

2 disordered regions span residues 67–96 and 200–219; these read LHLV…NNIS and QDDN…IKKS. Low complexity predominate over residues 72–94; it reads NNNNNNNDNKASSGSNNNNNNNN. Residues 208 to 218 are compositionally biased toward basic and acidic residues; the sequence is KDNKDNSEIKK. In terms of domain architecture, MPN spans 295–430; the sequence is GALVDFQSAN…MEAFQVSDQA (136 aa).

It belongs to the NPL4 family.

It participates in protein degradation; proteasomal ubiquitin-dependent pathway. May be part of a complex that binds ubiquitinated proteins and that is necessary for the export of misfolded proteins from the ER to the cytoplasm, where they are degraded by the proteasome. The polypeptide is Nuclear protein localization protein 4 homolog (nploc4) (Dictyostelium discoideum (Social amoeba)).